The following is a 224-amino-acid chain: PKHD-type hydroxylase Sbal195_0750 (224 aa).

Residues 78 to 176 (QFYPPLFNRY…RTAAFMWLQS (99 aa)) form the Fe2OG dioxygenase domain. Fe cation contacts are provided by His96, Asp98, and His157. Arg167 lines the 2-oxoglutarate pocket.

Fe(2+) serves as cofactor. Requires L-ascorbate as cofactor.

The chain is PKHD-type hydroxylase Sbal195_0750 from Shewanella baltica (strain OS195).